A 215-amino-acid polypeptide reads, in one-letter code: UPF0502 protein YceH (215 aa).

K80 carries the N6-acetyllysine modification.

The protein belongs to the UPF0502 family.

The polypeptide is UPF0502 protein YceH (Shigella sonnei (strain Ss046)).